We begin with the raw amino-acid sequence, 91 residues long: Acylphosphatase (91 aa).

Positions 3–90 (QYRIIVDGRV…EGHHRFSIVY (88 aa)) constitute an Acylphosphatase-like domain. Catalysis depends on residues Arg18 and Asn36.

Belongs to the acylphosphatase family.

It catalyses the reaction an acyl phosphate + H2O = a carboxylate + phosphate + H(+). This Bacillus subtilis (strain 168) protein is Acylphosphatase (acyP).